We begin with the raw amino-acid sequence, 82 residues long: MKKVLALVVAAAMGLSSAAFAAETATPAKTAAPAKTTQTTQHHKKQHKKTVEQKAQAAKKHQKKGGKAPAKTTSKPTTQPAA.

The signal sequence occupies residues 1–21 (MKKVLALVVAAAMGLSSAAFA). Residues 22 to 40 (AETATPAKTAAPAKTTQTT) are compositionally biased toward low complexity. Residues 22 to 56 (AETATPAKTAAPAKTTQTTQHHKKQHKKTVEQKAQ) constitute a propeptide that is removed on maturation. Positions 22-82 (AETATPAKTA…TSKPTTQPAA (61 aa)) are disordered. A compositionally biased stretch (basic residues) spans 57 to 66 (AAKKHQKKGG). The segment covering 67 to 82 (KAPAKTTSKPTTQPAA) has biased composition (low complexity).

The protein belongs to the Asr family. Proteolytic processing gives rise to the active protein.

Its subcellular location is the periplasm. Its function is as follows. Required for growth and/or survival at acidic conditions. In Salmonella typhimurium (strain LT2 / SGSC1412 / ATCC 700720), this protein is Acid shock protein (asr).